Reading from the N-terminus, the 472-residue chain is Carboxypeptidase Q (472 aa).

A signal peptide spans 1–20; sequence MKFLLFMFVGVVHLLPLASG. Residues 21 to 44 constitute a propeptide that is removed on maturation; that stretch reads KAIYGNGPSQRTFQEIKEEIAHYG. Residues asparagine 52, asparagine 61, and asparagine 179 are each glycosylated (N-linked (GlcNAc...) asparagine). Zn(2+)-binding residues include histidine 290 and aspartate 302. Glutamate 336 functions as the Nucleophile in the catalytic mechanism. Residue glutamate 337 participates in Zn(2+) binding. N-linked (GlcNAc...) asparagine glycans are attached at residues asparagine 353 and asparagine 356. Aspartate 364 is a binding site for Zn(2+). Asparagine 396 carries an N-linked (GlcNAc...) asparagine glycan. A Zn(2+)-binding site is contributed by histidine 434.

Belongs to the peptidase M28 family. As to quaternary structure, homodimer. The monomeric form is inactive while the homodimer is active. N-glycosylated. The secreted form is modified by hybrid or complex type oligosaccharide chains.

The protein localises to the endoplasmic reticulum. The protein resides in the golgi apparatus. Its subcellular location is the lysosome. It is found in the secreted. In terms of biological role, carboxypeptidase that may play an important role in the hydrolysis of circulating peptides. Catalyzes the hydrolysis of dipeptides with unsubstituted terminals into amino acids. May play a role in the liberation of thyroxine hormone from its thyroglobulin (Tg) precursor. The chain is Carboxypeptidase Q (CPQ) from Bos taurus (Bovine).